The primary structure comprises 66 residues: Large ribosomal subunit protein bL35 (66 aa).

The protein belongs to the bacterial ribosomal protein bL35 family.

The chain is Large ribosomal subunit protein bL35 from Synechococcus sp. (strain RCC307).